The sequence spans 504 residues: MATLRVDEIHKILRERIEQYNRKVGIENIGRVVQVGDGIARIIGLGEIMSGELVQFAEGTRGIALNLESKNVGIVLMGDGLMIQEGSFVKATGRIAQIPVSEAYLGRVVNALAKPIDGKGEIIASESRLIESPAPSIISRRSVYEPLQTGLIAIDSMIPIGRGQRELIIGDRQTGKTAVATDTILNQKGQGVICVYVAIGQRASSVAQVVTTFHEEGAMEYTIVVAEMADSPATLQYLAPYTGAALAEYFMYRERHTLIIYDDLSKQAQAYRQMSLLLRRPPGREAYPGDVFYLHSRLLERAAKLNSLLGEGSMTALPIVETQSGDVSAYIPTNVISITDGQIFLSADLFNAGIRPAINVGISVSRVGSAAQIKAMKQVAGKSKLELAQFAELQAFAQFASALDKTSQNQLARGRRLRELLKQSQANPLPVEEQIATIYTGTRGYLDSLEIEQVNKFLDELRKHLKDTKPQFQEIISSSKTFTEQAEILLKEAIQEQLERFSLQ.

ATP is bound at residue 170–177 (GDRQTGKT).

The protein belongs to the ATPase alpha/beta chains family. In terms of assembly, F-type ATPases have 2 components, CF(1) - the catalytic core - and CF(0) - the membrane proton channel. CF(1) has five subunits: alpha(3), beta(3), gamma(1), delta(1), epsilon(1). CF(0) has four main subunits: a, b, b' and c.

It is found in the plastid. It localises to the chloroplast thylakoid membrane. The enzyme catalyses ATP + H2O + 4 H(+)(in) = ADP + phosphate + 5 H(+)(out). Its function is as follows. Produces ATP from ADP in the presence of a proton gradient across the membrane. The alpha chain is a regulatory subunit. This is ATP synthase subunit alpha, chloroplastic from Hordeum vulgare (Barley).